We begin with the raw amino-acid sequence, 88 residues long: Small ribosomal subunit protein bS20 (88 aa).

Residues 1–21 show a composition bias toward basic residues; that stretch reads MANSKSAKKRALQSEKRRQHN. A disordered region spans residues 1 to 26; it reads MANSKSAKKRALQSEKRRQHNASRSS.

The protein belongs to the bacterial ribosomal protein bS20 family.

Functionally, binds directly to 16S ribosomal RNA. This chain is Small ribosomal subunit protein bS20, found in Shewanella halifaxensis (strain HAW-EB4).